The sequence spans 695 residues: MIVRMIRLCKGPKLLRSQFASASALYSTKSLFKPPMYQKAEINLIIPHRKHFLLRSIRLQSDIAQGKKSTKPTLKLSNANSKSSGFKDIKRLFVLSKPESKYIGLALLLILISSSVSMAVPSVIGKLLDLASESDGEDEEGSKSNKLYGFTKKQFFTALGAVFIIGAVANASRIIILKVTGERLVARLRTRTMKAALDQDATFLDTNRVGDLISRLSSDASIVAKSVTQNVSDGTRAIIQGFVGFGMMSFLSWKLTCVMMILAPPLGAMALIYGRKIRNLSRQLQTSVGGLTKVAEEQLNATRTIQAYGGEKNEVRRYAKEVRNVFHIGLKEAVTSGLFFGSTGLVGNTAMLSLLLVGTSMIQSGSMTVGELSSFMMYAVYTGSSLFGLSSFYSELMKGAGAAARVFELNDRKPLIRPTIGKDPVSLAQKPIVFKNVSFTYPTRPKHQIFKDLNITIKPGEHVCAVGPSGSGKSTIASLLLRYYDVNSGSIEFGDEDIRNFNLRKYRRLIGYVQQEPLLFNGTILDNILYCIPPEIAEQDDRIRRAIGKANCTKFLANFPDGLQTMVGARGAQLSGGQKQRIALARAFLLDPAVLILDEATSALDSQSEEIVAKNLQRRVERGFTTISIAHRLSTIKHSTRVIVLGKHGSVVETGSFRDLIAIPNSELNALLAEQQDEEGKGGVIDLDNSVAREV.

A mitochondrion-targeting transit peptide spans 1–100 (MIVRMIRLCK…RLFVLSKPES (100 aa)). The next 5 helical transmembrane spans lie at 103 to 123 (IGLA…VPSV), 156 to 176 (FTAL…RIII), 242 to 262 (FVGF…MMIL), 337 to 357 (GLFF…LLLV), and 372 to 392 (LSSF…LSSF). The ABC transmembrane type-1 domain occupies 103–398 (IGLALLLILI…LSSFYSELMK (296 aa)). The region spanning 432–673 (IVFKNVSFTY…PNSELNALLA (242 aa)) is the ABC transporter domain. 467–474 (GPSGSGKS) lines the ATP pocket.

This sequence belongs to the ABC transporter superfamily. ABCB family. Mitochondrial peptide exporter (TC 3.A.1.212) subfamily.

The protein localises to the mitochondrion inner membrane. Functionally, mediates export of peptides with molecular masses of 2100 to 600 daltons generated upon proteolysis of mitochondrial inner membrane proteins. In Saccharomyces cerevisiae (strain ATCC 204508 / S288c) (Baker's yeast), this protein is ATP-dependent permease MDL1, mitochondrial (MDL1).